A 163-amino-acid polypeptide reads, in one-letter code: Beta-carbonic anhydrase 1 (163 aa).

The Zn(2+) site is built by cysteine 35, aspartate 37, histidine 88, and cysteine 91.

It belongs to the beta-class carbonic anhydrase family. As to quaternary structure, homotetramer. The cofactor is Zn(2+).

The catalysed reaction is hydrogencarbonate + H(+) = CO2 + H2O. Catalyzes the reversible hydration of carbon dioxide to form bicarbonate. The polypeptide is Beta-carbonic anhydrase 1 (Mycobacterium bovis (strain ATCC BAA-935 / AF2122/97)).